Consider the following 1473-residue polypeptide: Sulfite reductase [NADPH] subunit beta (1473 aa).

A Flavodoxin-like domain is found at 728–876 (LTILFASDGG…AYNLWEPELW (149 aa)). Positions 1328, 1334, 1373, and 1377 each coordinate [4Fe-4S] cluster. Cysteine 1377 contributes to the siroheme binding site.

Belongs to the nitrite and sulfite reductase 4Fe-4S domain family. Alpha(2)-beta(2). The alpha component is a flavoprotein, the beta component is a hemoprotein. It depends on siroheme as a cofactor. [4Fe-4S] cluster is required as a cofactor.

It is found in the cytoplasm. The catalysed reaction is hydrogen sulfide + 3 NADP(+) + 3 H2O = sulfite + 3 NADPH + 4 H(+). It participates in sulfur metabolism; hydrogen sulfide biosynthesis; hydrogen sulfide from sulfite (NADPH route): step 1/1. Catalyzes the reduction of sulfite to sulfide, one of several activities required for the biosynthesis of L-cysteine from sulfate. This is Sulfite reductase [NADPH] subunit beta (sir1) from Schizosaccharomyces pombe (strain 972 / ATCC 24843) (Fission yeast).